The sequence spans 433 residues: Serine hydroxymethyltransferase (433 aa).

(6S)-5,6,7,8-tetrahydrofolate-binding positions include Leu133 and 137 to 139 (GHL). Residue Lys242 is modified to N6-(pyridoxal phosphate)lysine. 366–368 (SPF) is a (6S)-5,6,7,8-tetrahydrofolate binding site.

Belongs to the SHMT family. In terms of assembly, homodimer. The cofactor is pyridoxal 5'-phosphate.

It localises to the cytoplasm. It catalyses the reaction (6R)-5,10-methylene-5,6,7,8-tetrahydrofolate + glycine + H2O = (6S)-5,6,7,8-tetrahydrofolate + L-serine. Its pathway is one-carbon metabolism; tetrahydrofolate interconversion. The protein operates within amino-acid biosynthesis; glycine biosynthesis; glycine from L-serine: step 1/1. In terms of biological role, catalyzes the reversible interconversion of serine and glycine with tetrahydrofolate (THF) serving as the one-carbon carrier. This reaction serves as the major source of one-carbon groups required for the biosynthesis of purines, thymidylate, methionine, and other important biomolecules. Also exhibits THF-independent aldolase activity toward beta-hydroxyamino acids, producing glycine and aldehydes, via a retro-aldol mechanism. The polypeptide is Serine hydroxymethyltransferase (Beijerinckia indica subsp. indica (strain ATCC 9039 / DSM 1715 / NCIMB 8712)).